Reading from the N-terminus, the 247-residue chain is UPF0309 protein lin2794 (247 aa).

An SIS domain is found at 31–214 (VAESIENDGV…EKMVNDNFTP (184 aa)).

This sequence belongs to the UPF0309 family.

In Listeria innocua serovar 6a (strain ATCC BAA-680 / CLIP 11262), this protein is UPF0309 protein lin2794.